A 404-amino-acid polypeptide reads, in one-letter code: uncharacterized protein (404 aa).

The span at 1–22 (MASSINNSSQPTVPSISNNSHG) shows a compositional bias: polar residues. A disordered region spans residues 1 to 110 (MASSINNSSQ…QQTPVKRRRR (110 aa)). Thr47 carries the phosphothreonine modification. The span at 87–104 (SRGSSLKSHLETESQQTP) shows a compositional bias: polar residues. Residues 117–166 (VDYCSACGGRGLFICCEGCPCSFHLSCLEPPLTPENIPEGSWFCVTCSIK) form a PHD-type zinc finger.

This is an uncharacterized protein from Schizosaccharomyces pombe (strain 972 / ATCC 24843) (Fission yeast).